The chain runs to 728 residues: 1,4-alpha-glucan branching enzyme GlgB (728 aa).

Aspartate 405 (nucleophile) is an active-site residue. Glutamate 458 acts as the Proton donor in catalysis.

It belongs to the glycosyl hydrolase 13 family. GlgB subfamily. As to quaternary structure, monomer.

The catalysed reaction is Transfers a segment of a (1-&gt;4)-alpha-D-glucan chain to a primary hydroxy group in a similar glucan chain.. Its pathway is glycan biosynthesis; glycogen biosynthesis. Functionally, catalyzes the formation of the alpha-1,6-glucosidic linkages in glycogen by scission of a 1,4-alpha-linked oligosaccharide from growing alpha-1,4-glucan chains and the subsequent attachment of the oligosaccharide to the alpha-1,6 position. This is 1,4-alpha-glucan branching enzyme GlgB from Shigella flexneri serotype 5b (strain 8401).